The primary structure comprises 78 residues: RNA-binding protein Hfq (78 aa).

Residues 10–69 enclose the Sm domain; it reads DPFLNTLRKEHVPVSIYLVNGIKLQGQIESFDQYVVLLRNTVTQMVYKHAISTVVPARAV.

Belongs to the Hfq family. Homohexamer.

Functionally, RNA chaperone that binds small regulatory RNA (sRNAs) and mRNAs to facilitate mRNA translational regulation in response to envelope stress, environmental stress and changes in metabolite concentrations. Also binds with high specificity to tRNAs. This Bordetella petrii (strain ATCC BAA-461 / DSM 12804 / CCUG 43448) protein is RNA-binding protein Hfq.